The primary structure comprises 160 residues: uncharacterized protein (160 aa).

The RING-type zinc-finger motif lies at 8–46; the sequence is CAVCLDFFVEPCIIECGHSYCRFCIESHLNINEKCPLCR.

This is an uncharacterized protein from Caenorhabditis elegans.